A 260-amino-acid polypeptide reads, in one-letter code: Thiazole synthase (260 aa).

The Schiff-base intermediate with DXP role is filled by K102. 1-deoxy-D-xylulose 5-phosphate is bound by residues G163, A189–G190, and N211–T212.

This sequence belongs to the ThiG family. Homotetramer. Forms heterodimers with either ThiH or ThiS.

It localises to the cytoplasm. It catalyses the reaction [ThiS sulfur-carrier protein]-C-terminal-Gly-aminoethanethioate + 2-iminoacetate + 1-deoxy-D-xylulose 5-phosphate = [ThiS sulfur-carrier protein]-C-terminal Gly-Gly + 2-[(2R,5Z)-2-carboxy-4-methylthiazol-5(2H)-ylidene]ethyl phosphate + 2 H2O + H(+). It functions in the pathway cofactor biosynthesis; thiamine diphosphate biosynthesis. Catalyzes the rearrangement of 1-deoxy-D-xylulose 5-phosphate (DXP) to produce the thiazole phosphate moiety of thiamine. Sulfur is provided by the thiocarboxylate moiety of the carrier protein ThiS. In vitro, sulfur can be provided by H(2)S. The protein is Thiazole synthase of Geobacter sulfurreducens (strain ATCC 51573 / DSM 12127 / PCA).